A 386-amino-acid chain; its full sequence is Glucose-1-phosphate adenylyltransferase (386 aa).

Residues Y100, G165, 180–181 (EK), and S191 contribute to the alpha-D-glucose 1-phosphate site.

The protein belongs to the bacterial/plant glucose-1-phosphate adenylyltransferase family. In terms of assembly, homotetramer.

The enzyme catalyses alpha-D-glucose 1-phosphate + ATP + H(+) = ADP-alpha-D-glucose + diphosphate. It functions in the pathway glycan biosynthesis; glycogen biosynthesis. Its function is as follows. Involved in the biosynthesis of ADP-glucose, a building block required for the elongation reactions to produce glycogen. Catalyzes the reaction between ATP and alpha-D-glucose 1-phosphate (G1P) to produce pyrophosphate and ADP-Glc. The polypeptide is Glucose-1-phosphate adenylyltransferase (Clostridium beijerinckii (strain ATCC 51743 / NCIMB 8052) (Clostridium acetobutylicum)).